The primary structure comprises 968 residues: Translation initiation factor IF-2 (968 aa).

The segment covering 51-76 (PAAGASKSEAPAAAPKAPASPAATRP) has biased composition (low complexity). The tract at residues 51-369 (PAAGASKSEA…GVSVPRGDGN (319 aa)) is disordered. Over residues 77–87 (APAPGPAAPKA) the composition is skewed to pro residues. The segment covering 93–102 (EAPAAASAPS) has biased composition (low complexity). Over residues 103–112 (APAPAAPAPA) the composition is skewed to pro residues. Composition is skewed to low complexity over residues 113-122 (APAAAASAPS), 128-170 (APST…GNNP), and 239-254 (GARP…PGAR). A compositionally biased stretch (gly residues) spans 281-336 (GRPGGGGRGPGRPGGAPGTGGAPGAGGGAPAGGGFGKGGRGRGGTQGAFGKGGAGR). Positions 337–346 (GKQRKSKRAK) are enriched in basic residues. Positions 461-632 (ARPPVVTVMG…AVLLTADAAL (172 aa)) constitute a tr-type G domain. A G1 region spans residues 470-477 (GHVDHGKT). 470-477 (GHVDHGKT) lines the GTP pocket. The interval 495 to 499 (GITQH) is G2. The segment at 520-523 (DTPG) is G3. GTP-binding positions include 520 to 524 (DTPGH) and 574 to 577 (NKID). A G4 region spans residues 574–577 (NKID). The tract at residues 610–612 (SAR) is G5.

It belongs to the TRAFAC class translation factor GTPase superfamily. Classic translation factor GTPase family. IF-2 subfamily.

Its subcellular location is the cytoplasm. Its function is as follows. One of the essential components for the initiation of protein synthesis. Protects formylmethionyl-tRNA from spontaneous hydrolysis and promotes its binding to the 30S ribosomal subunits. Also involved in the hydrolysis of GTP during the formation of the 70S ribosomal complex. This is Translation initiation factor IF-2 from Arthrobacter sp. (strain FB24).